Consider the following 412-residue polypeptide: Vacuolar calcium ion transporter (412 aa).

At 1–55 the chain is on the cytoplasmic side; that stretch reads MIERLKIAKNRLEAMNSFNFPAQDRHERAPLLGSEYDHSMARQLSLLNVVGMTKS. A helical membrane pass occupies residues 56–76; sequence VLMSSYFNLMLVFVPIGLIAG. Residues 77–83 lie on the Lumenal side of the membrane; that stretch reads WFEWNAK. Residues 84 to 104 traverse the membrane as a helical segment; that stretch reads SVFILNMLAIIPLASLLSFAT. The Cytoplasmic segment spans residues 105–114; the sequence is EQLSIISGPT. A helical transmembrane segment spans residues 115-135; sequence LGALLNASFGNAIELIVGVLA. The Lumenal portion of the chain corresponds to 136–148; sequence LKRGELRIVQSSL. A helical membrane pass occupies residues 149 to 169; the sequence is LGSILSNLLLVFGMCLVTTGI. Residues 170 to 177 lie on the Cytoplasmic side of the membrane; sequence RREITTFN. The chain crosses the membrane as a helical span at residues 178–198; that stretch reads ITVAQTMIAMLALSTATILIP. Residues 199–215 lie on the Lumenal side of the membrane; it reads ATFHYSLPDNANSENAL. Residues 216-236 form a helical membrane-spanning segment; it reads LHVSRGTAVIVLIVYVLLLVF. Residues 237–264 lie on the Cytoplasmic side of the membrane; sequence QLKTHKHVCHDPSEVEEETEPRILGLRS. Residues 265–285 form a helical membrane-spanning segment; the sequence is SIAMLAIVTVFVSLCADYLVG. The Lumenal portion of the chain corresponds to 286–299; sequence SIDQLVEEVNISKT. Residues 300 to 320 form a helical membrane-spanning segment; sequence FVGLVILPVVGNAAEHVTAIV. At 321-334 the chain is on the cytoplasmic side; that stretch reads VSYRGQMDLALGVA. Residues 335–355 traverse the membrane as a helical segment; sequence IGSSIQIALFLAPFLVIVGWI. The Lumenal segment spans residues 356–358; that stretch reads ISQ. The helical transmembrane segment at 359-379 threads the bilayer; that stretch reads PLTLYFESLETVILFVSVFLV. Topologically, residues 380 to 389 are cytoplasmic; the sequence is NYLIQDGATH. A helical transmembrane segment spans residues 390-410; that stretch reads WLEGVQLLALYAIVVLAFFYY. Residues 411-412 lie on the Lumenal side of the membrane; it reads PQ.

Belongs to the Ca(2+):cation antiporter (CaCA) (TC 2.A.19) family.

It is found in the vacuole membrane. It localises to the endoplasmic reticulum membrane. In terms of biological role, has a role in promoting intracellular calcium ion sequestration via the exchange of calcium ions for hydrogen ions across the vacuolar membrane. Involved also in manganese ion homeostasis via its uptake into the vacuole. This is Vacuolar calcium ion transporter (vcx1) from Schizosaccharomyces pombe (strain 972 / ATCC 24843) (Fission yeast).